The following is a 435-amino-acid chain: MNIGEKILLLLKEEIPEIEYNRYIKHLTYDTKKSTADNAIFYVPNSLVLSWIKNRYSSKIKHLFEIQNSIKVDVSILLKNQVESKKAEQKSVQKQQHSLLNPSHTFENFMVGGSNQFAYAAVKSVSEKAGVLYNPLFIHGGVGLGKTHLMQAAGNVFQNQGKVVIYTTVEQFLNDFIRHVRNKTMERFQEKYRKCDVLLIDDIQFLSNKEGIQEEFFHTFEALKGVGKQIILTADKHPKKIAGLEKRLQSRFEHGLVADIQPPELETKIAIIENKCKINKVILTKDIIHYIATVIESNVREIEGILSKLHAYSQLMHVDIDLQFTKNVLKDQLQENRANLTLDIITQNVAKDLNIKPSEIRSKGRSKNLVYARRIAIYLCRELTQNTMPQLAQYFGMQDHTAISHTLKKIGELMQNDEDFKVKIEELTNKITSSS.

Residues 1–70 form a domain I, interacts with DnaA modulators region; the sequence is MNIGEKILLL…KHLFEIQNSI (70 aa). Residues 70-98 form a domain II region; sequence IKVDVSILLKNQVESKKAEQKSVQKQQHS. A domain III, AAA+ region region spans residues 99-313; the sequence is LLNPSHTFEN…GILSKLHAYS (215 aa). The ATP site is built by Gly-143, Gly-145, Lys-146, and Thr-147. Residues 314–435 are domain IV, binds dsDNA; it reads QLMHVDIDLQ…ELTNKITSSS (122 aa).

This sequence belongs to the DnaA family. Oligomerizes as a right-handed, spiral filament on DNA at oriC.

The protein resides in the cytoplasm. Functionally, plays an essential role in the initiation and regulation of chromosomal replication. ATP-DnaA binds to the origin of replication (oriC) to initiate formation of the DNA replication initiation complex once per cell cycle. Binds the DnaA box (a 9 base pair repeat at the origin) and separates the double-stranded (ds)DNA. Forms a right-handed helical filament on oriC DNA; dsDNA binds to the exterior of the filament while single-stranded (ss)DNA is stabiized in the filament's interior. The ATP-DnaA-oriC complex binds and stabilizes one strand of the AT-rich DNA unwinding element (DUE), permitting loading of DNA polymerase. After initiation quickly degrades to an ADP-DnaA complex that is not apt for DNA replication. Binds acidic phospholipids. In Sulfurimonas denitrificans (strain ATCC 33889 / DSM 1251) (Thiomicrospira denitrificans (strain ATCC 33889 / DSM 1251)), this protein is Chromosomal replication initiator protein DnaA.